The following is a 329-amino-acid chain: Peroxidase 18 (329 aa).

Residues 1–29 form the signal peptide; the sequence is MALQFFSCKPKYTFLSSLLLLLLLSSSVA. 4 disulfides stabilise this stretch: cysteine 40/cysteine 116, cysteine 73/cysteine 78, cysteine 122/cysteine 325, and cysteine 201/cysteine 235. Histidine 71 functions as the Proton acceptor in the catalytic mechanism. Ca(2+) contacts are provided by aspartate 72, valine 75, glycine 77, aspartate 79, and serine 81. A glycan (N-linked (GlcNAc...) asparagine) is linked at asparagine 87. Substrate is bound at residue isoleucine 164. Histidine 194 lines the heme b pocket. Threonine 195 lines the Ca(2+) pocket. Residues aspartate 249, threonine 252, and aspartate 257 each coordinate Ca(2+).

It belongs to the peroxidase family. Classical plant (class III) peroxidase subfamily. It depends on heme b as a cofactor. Requires Ca(2+) as cofactor.

It localises to the secreted. It catalyses the reaction 2 a phenolic donor + H2O2 = 2 a phenolic radical donor + 2 H2O. Functionally, removal of H(2)O(2), oxidation of toxic reductants, biosynthesis and degradation of lignin, suberization, auxin catabolism, response to environmental stresses such as wounding, pathogen attack and oxidative stress. These functions might be dependent on each isozyme/isoform in each plant tissue. The polypeptide is Peroxidase 18 (PER18) (Arabidopsis thaliana (Mouse-ear cress)).